Here is a 470-residue protein sequence, read N- to C-terminus: Poly(A) polymerase catalytic subunit (470 aa).

Residues Asp-192 and Asp-194 contribute to the active site.

Belongs to the poxviridae poly(A) polymerase catalytic subunit family. As to quaternary structure, heterodimer of a large (catalytic) subunit and a small (regulatory) subunit.

It carries out the reaction RNA(n) + ATP = RNA(n)-3'-adenine ribonucleotide + diphosphate. Functionally, polymerase that creates the 3'-poly(A) tail of mRNA's. This chain is Poly(A) polymerase catalytic subunit (PAPL), found in Molluscum contagiosum virus subtype 1 (MOCV).